Here is a 530-residue protein sequence, read N- to C-terminus: Bifunctional purine biosynthesis protein PurH (530 aa).

The MGS-like domain maps to 1–148 (MNNARPIRRA…KNHKDVTIVV (148 aa)).

It belongs to the PurH family.

It carries out the reaction (6R)-10-formyltetrahydrofolate + 5-amino-1-(5-phospho-beta-D-ribosyl)imidazole-4-carboxamide = 5-formamido-1-(5-phospho-D-ribosyl)imidazole-4-carboxamide + (6S)-5,6,7,8-tetrahydrofolate. The catalysed reaction is IMP + H2O = 5-formamido-1-(5-phospho-D-ribosyl)imidazole-4-carboxamide. It participates in purine metabolism; IMP biosynthesis via de novo pathway; 5-formamido-1-(5-phospho-D-ribosyl)imidazole-4-carboxamide from 5-amino-1-(5-phospho-D-ribosyl)imidazole-4-carboxamide (10-formyl THF route): step 1/1. It functions in the pathway purine metabolism; IMP biosynthesis via de novo pathway; IMP from 5-formamido-1-(5-phospho-D-ribosyl)imidazole-4-carboxamide: step 1/1. In Vibrio campbellii (strain ATCC BAA-1116), this protein is Bifunctional purine biosynthesis protein PurH.